A 664-amino-acid polypeptide reads, in one-letter code: DNA primase (664 aa).

A CHC2-type zinc finger spans residues C40–C64. The span at G94–G104 shows a compositional bias: basic and acidic residues. The disordered stretch occupies residues G94–S115. A Toprim domain is found at D262–P344. 3 residues coordinate Mg(2+): E268, D312, and D314. Residues P483–V521 form a disordered region. Residues W487–A515 are compositionally biased toward basic and acidic residues.

Belongs to the DnaG primase family. Monomer. Interacts with DnaB. It depends on Zn(2+) as a cofactor. Mg(2+) serves as cofactor.

The enzyme catalyses ssDNA + n NTP = ssDNA/pppN(pN)n-1 hybrid + (n-1) diphosphate.. Its function is as follows. RNA polymerase that catalyzes the synthesis of short RNA molecules used as primers for DNA polymerase during DNA replication. The chain is DNA primase from Pseudomonas aeruginosa (strain ATCC 15692 / DSM 22644 / CIP 104116 / JCM 14847 / LMG 12228 / 1C / PRS 101 / PAO1).